Consider the following 2290-residue polypeptide: Protein Ycf2 (2290 aa).

Residues 505 to 530 (GSNPTERSTRDQKSLKKQQDVSFVPP) are disordered. Residues 511 to 523 (RSTRDQKSLKKQQ) show a composition bias toward basic and acidic residues. Residue 1639 to 1646 (GSIGTGRS) participates in ATP binding.

The protein belongs to the Ycf2 family.

The protein localises to the plastid. It localises to the chloroplast stroma. Functionally, probable ATPase of unknown function. Its presence in a non-photosynthetic plant (Epifagus virginiana) and experiments in tobacco indicate that it has an essential function which is probably not related to photosynthesis. The polypeptide is Protein Ycf2 (Ceratophyllum demersum (Rigid hornwort)).